The sequence spans 922 residues: Coronin-7 (922 aa).

WD repeat units follow at residues 75-115 (CHSD…EALP), 124-163 (PEELPVEVLQFHPTVDGVLVSTAGKTVKVWDVAKQQPLTE), 166-205 (AHKDLVQSAVWSRDGAIVGTACKDKQLRIFDPRARTQASQ), and 209-253 (AHEN…SALA). Residues 419–467 (DTDLSEGFSSPSSLMSPSTPSSLGPSLSSTSGIGTSPSQRSLQSLLGPS) are disordered. The segment covering 427-456 (SSPSSLMSPSTPSSLGPSLSSTSGIGTSPS) has biased composition (low complexity). 2 positions are modified to phosphoserine: Ser-459 and Ser-462. Lys-469 participates in a covalent cross-link: Glycyl lysine isopeptide (Lys-Gly) (interchain with G-Cter in ubiquitin). WD repeat units follow at residues 539–581 (QNGT…NVLT), 589–629 (GHTE…ERLK), 632–671 (GHQDQIFSLAWSPDGKQLATVCKDGHVRVYEPRSSPLPLQ), and 725–765 (DVAP…PFFL). Residues 858–922 (GMTPVSQAPR…FEGVDEDEWD (65 aa)) form a disordered region. Positions 881–893 (LEEKSDQQKKEEL) are enriched in basic and acidic residues. Phosphoserine is present on Ser-912.

Belongs to the WD repeat coronin family. As to quaternary structure, interacts with clathrin adapter AP1 complex. This interaction takes place at Golgi membranes and not AP1-positive endosomal membranes. Interacts (when ubiquitinated at Lys-469) with EPS15. The membrane-associated form is phosphorylated on tyrosine residues. Post-translationally, ubiquitinated via 'Lys-33'-linked ubiquitin chains by the BCR(KLHL20) E3 ubiquitin ligase complex: 'Lys-33'-linked ubiquitination promotes interaction with EPS15 and facilitates actin polymerization at the trans-Golgi network, thereby facilitating post-Golgi trafficking. Deubiquitinated by ZRANB1/TRABID. In terms of tissue distribution, in the adult, widely expressed with highest levels in brain, thymus and kidney and low levels in skeletal and heart muscle. Not expressed in lung. In the eye, strongly expressed in the outer plexiform layer of the retina. In the intestine, expressed both in terminally differentiated epithelial cells and in crypt epithelium. In the embryo, strongest expression is seen in brain, thymus, intestine, apical epidermal layers of the skin and developing lens fibers of the eye.

It localises to the golgi apparatus membrane. It is found in the golgi apparatus. The protein resides in the trans-Golgi network. Its subcellular location is the cytoplasmic vesicle. The protein localises to the cytoplasm. It localises to the cytosol. F-actin regulator involved in anterograde Golgi to endosome transport: upon ubiquitination via 'Lys-33'-linked ubiquitin chains by the BCR(KLHL20) E3 ubiquitin ligase complex, interacts with EPS15 and localizes to the trans-Golgi network, where it promotes actin polymerization, thereby facilitating post-Golgi trafficking. May play a role in the maintenance of the Golgi apparatus morphology. The chain is Coronin-7 (Coro7) from Mus musculus (Mouse).